The chain runs to 307 residues: Transcription factor DIVARICATA (307 aa).

Residues 21-74 enclose the SANT domain; sequence RSTTRWTAAENKAFENALAVFDENTPNRWERVAERVPGKTVGDVMRQYKELEDD. The interval 109 to 133 is disordered; it reads QSYGTGGRKSSSGRPSEQERKKGVP. Residues 124-133 are compositionally biased toward basic and acidic residues; that stretch reads SEQERKKGVP. The 57-residue stretch at 126 to 182 folds into the HTH myb-type domain; that stretch reads QERKKGVPWTEEEHKLFLMGLKKYGKGDWRNISRNFVITRTPTQVASHAQKYFIRQL. Positions 154–178 form a DNA-binding region, H-T-H motif; it reads WRNISRNFVITRTPTQVASHAQKYF. 2 stretches are compositionally biased toward polar residues: residues 196–206 and 222–231; these read ITTVNLSDNQT and MAQQQTSSTS. The interval 196 to 231 is disordered; the sequence is ITTVNLSDNQTPSPDNKKPPSSPDHSMAQQQTSSTS.

Its subcellular location is the nucleus. Its function is as follows. Involved in the dorsovental asymmetry of flowers. Promotes ventral identity. This Antirrhinum majus (Garden snapdragon) protein is Transcription factor DIVARICATA (DIVARICATA).